Here is a 451-residue protein sequence, read N- to C-terminus: tRNA-2-methylthio-N(6)-dimethylallyladenosine synthase (451 aa).

Residues 3–120 (LKLHIKTYGC…LPEMINHVRI (118 aa)) enclose the MTTase N-terminal domain. [4Fe-4S] cluster contacts are provided by cysteine 12, cysteine 49, cysteine 83, cysteine 157, cysteine 161, and cysteine 164. The Radical SAM core domain maps to 143-375 (QAKGPTAFVS…QECIRKQAMK (233 aa)). The TRAM domain occupies 378–441 (QAMKGTVQCI…SNSLRGELIS (64 aa)).

Belongs to the methylthiotransferase family. MiaB subfamily. In terms of assembly, monomer. The cofactor is [4Fe-4S] cluster.

It localises to the cytoplasm. It catalyses the reaction N(6)-dimethylallyladenosine(37) in tRNA + (sulfur carrier)-SH + AH2 + 2 S-adenosyl-L-methionine = 2-methylsulfanyl-N(6)-dimethylallyladenosine(37) in tRNA + (sulfur carrier)-H + 5'-deoxyadenosine + L-methionine + A + S-adenosyl-L-homocysteine + 2 H(+). Catalyzes the methylthiolation of N6-(dimethylallyl)adenosine (i(6)A), leading to the formation of 2-methylthio-N6-(dimethylallyl)adenosine (ms(2)i(6)A) at position 37 in tRNAs that read codons beginning with uridine. The sequence is that of tRNA-2-methylthio-N(6)-dimethylallyladenosine synthase from Baumannia cicadellinicola subsp. Homalodisca coagulata.